Consider the following 296-residue polypeptide: Acetylglutamate kinase (296 aa).

Substrate is bound by residues 67 to 68 (GG), arginine 89, and asparagine 194.

It belongs to the acetylglutamate kinase family. ArgB subfamily.

The protein localises to the cytoplasm. The enzyme catalyses N-acetyl-L-glutamate + ATP = N-acetyl-L-glutamyl 5-phosphate + ADP. It participates in amino-acid biosynthesis; L-arginine biosynthesis; N(2)-acetyl-L-ornithine from L-glutamate: step 2/4. Functionally, catalyzes the ATP-dependent phosphorylation of N-acetyl-L-glutamate. The protein is Acetylglutamate kinase of Brucella canis (strain ATCC 23365 / NCTC 10854 / RM-666).